Here is a 506-residue protein sequence, read N- to C-terminus: Galactose/methyl galactoside import ATP-binding protein MglA (506 aa).

ABC transporter domains are found at residues 14 to 249 (LEMS…VGRS) and 264 to 506 (VILE…SLHL). Position 46–53 (46–53 (GENGAGKS)) interacts with ATP.

It belongs to the ABC transporter superfamily. Galactose/methyl galactoside importer (TC 3.A.1.2.3) family. The complex is composed of one ATP-binding protein (MglA), two transmembrane proteins (MglC) and a solute-binding protein (MglB).

The protein localises to the cell inner membrane. It carries out the reaction D-galactose(out) + ATP + H2O = D-galactose(in) + ADP + phosphate + H(+). The enzyme catalyses methyl beta-D-galactoside(out) + ATP + H2O = methyl beta-D-galactoside(in) + ADP + phosphate + H(+). Part of the ABC transporter complex MglABC involved in galactose/methyl galactoside import. Responsible for energy coupling to the transport system. The protein is Galactose/methyl galactoside import ATP-binding protein MglA of Yersinia pestis bv. Antiqua (strain Antiqua).